The following is a 60-amino-acid chain: Large ribosomal subunit protein uL30 (60 aa).

Belongs to the universal ribosomal protein uL30 family. As to quaternary structure, part of the 50S ribosomal subunit.

The sequence is that of Large ribosomal subunit protein uL30 from Agathobacter rectalis (strain ATCC 33656 / DSM 3377 / JCM 17463 / KCTC 5835 / VPI 0990) (Eubacterium rectale).